A 306-amino-acid chain; its full sequence is Tyrosine--tRNA ligase (306 aa).

Tyr-32 and Glu-36 together coordinate L-tyrosine. Positions Pro-37–His-45 match the 'HIGH' region motif. A tyrosine region spans residues Tyr-151–Asp-158. An L-tyrosine-binding site is contributed by Gln-173. A 'KMSKS' region motif is present at residues Lys-204 to Ser-208. Ser-207 contributes to the ATP binding site. Interaction with t-RNA stretches follow at residues Lys-228–Cys-231 and His-283–Lys-288.

This sequence belongs to the class-I aminoacyl-tRNA synthetase family. TyrS type 3 subfamily. Homodimer.

The protein resides in the cytoplasm. It catalyses the reaction tRNA(Tyr) + L-tyrosine + ATP = L-tyrosyl-tRNA(Tyr) + AMP + diphosphate + H(+). In terms of biological role, catalyzes the attachment of tyrosine to tRNA(Tyr) in a two-step reaction: tyrosine is first activated by ATP to form Tyr-AMP and then transferred to the acceptor end of tRNA(Tyr). The polypeptide is Tyrosine--tRNA ligase (tyrS) (Methanocaldococcus jannaschii (strain ATCC 43067 / DSM 2661 / JAL-1 / JCM 10045 / NBRC 100440) (Methanococcus jannaschii)).